The chain runs to 405 residues: Phosphopentomutase (405 aa).

The Mn(2+) site is built by aspartate 10, aspartate 305, histidine 310, aspartate 346, histidine 347, and histidine 358.

It belongs to the phosphopentomutase family. The cofactor is Mn(2+).

It localises to the cytoplasm. The enzyme catalyses 2-deoxy-alpha-D-ribose 1-phosphate = 2-deoxy-D-ribose 5-phosphate. It catalyses the reaction alpha-D-ribose 1-phosphate = D-ribose 5-phosphate. The protein operates within carbohydrate degradation; 2-deoxy-D-ribose 1-phosphate degradation; D-glyceraldehyde 3-phosphate and acetaldehyde from 2-deoxy-alpha-D-ribose 1-phosphate: step 1/2. Functionally, isomerase that catalyzes the conversion of deoxy-ribose 1-phosphate (dRib-1-P) and ribose 1-phosphate (Rib-1-P) to deoxy-ribose 5-phosphate (dRib-5-P) and ribose 5-phosphate (Rib-5-P), respectively. The chain is Phosphopentomutase from Methylorubrum extorquens (strain CM4 / NCIMB 13688) (Methylobacterium extorquens).